Reading from the N-terminus, the 171-residue chain is Peptide methionine sulfoxide reductase MsrA (171 aa).

Cys-13 is a catalytic residue.

The protein belongs to the MsrA Met sulfoxide reductase family.

It catalyses the reaction L-methionyl-[protein] + [thioredoxin]-disulfide + H2O = L-methionyl-(S)-S-oxide-[protein] + [thioredoxin]-dithiol. It carries out the reaction [thioredoxin]-disulfide + L-methionine + H2O = L-methionine (S)-S-oxide + [thioredoxin]-dithiol. In terms of biological role, has an important function as a repair enzyme for proteins that have been inactivated by oxidation. Catalyzes the reversible oxidation-reduction of methionine sulfoxide in proteins to methionine. This is Peptide methionine sulfoxide reductase MsrA from Mycolicibacterium paratuberculosis (strain ATCC BAA-968 / K-10) (Mycobacterium paratuberculosis).